Consider the following 171-residue polypeptide: Large ribosomal subunit protein bL9 (171 aa).

Belongs to the bacterial ribosomal protein bL9 family.

In terms of biological role, binds to the 23S rRNA. The polypeptide is Large ribosomal subunit protein bL9 (Rickettsia typhi (strain ATCC VR-144 / Wilmington)).